The chain runs to 20 residues: Cytochrome c oxidase subunit 7B-liver, mitochondrial (20 aa).

Belongs to the cytochrome c oxidase VIIb family. Component of the cytochrome c oxidase (complex IV, CIV), a multisubunit enzyme composed of 14 subunits. The complex is composed of a catalytic core of 3 subunits MT-CO1, MT-CO2 and MT-CO3, encoded in the mitochondrial DNA, and 11 supernumerary subunits COX4I, COX5A, COX5B, COX6A, COX6B, COX6C, COX7A, COX7B, COX7C, COX8 and NDUFA4, which are encoded in the nuclear genome. The complex exists as a monomer or a dimer and forms supercomplexes (SCs) in the inner mitochondrial membrane with NADH-ubiquinone oxidoreductase (complex I, CI) and ubiquinol-cytochrome c oxidoreductase (cytochrome b-c1 complex, complex III, CIII), resulting in different assemblies (supercomplex SCI(1)III(2)IV(1) and megacomplex MCI(2)III(2)IV(2)).

The protein resides in the mitochondrion inner membrane. The enzyme catalyses 4 Fe(II)-[cytochrome c] + O2 + 8 H(+)(in) = 4 Fe(III)-[cytochrome c] + 2 H2O + 4 H(+)(out). The protein operates within energy metabolism; oxidative phosphorylation. Component of the cytochrome c oxidase, the last enzyme in the mitochondrial electron transport chain which drives oxidative phosphorylation. The respiratory chain contains 3 multisubunit complexes succinate dehydrogenase (complex II, CII), ubiquinol-cytochrome c oxidoreductase (cytochrome b-c1 complex, complex III, CIII) and cytochrome c oxidase (complex IV, CIV), that cooperate to transfer electrons derived from NADH and succinate to molecular oxygen, creating an electrochemical gradient over the inner membrane that drives transmembrane transport and the ATP synthase. Cytochrome c oxidase is the component of the respiratory chain that catalyzes the reduction of oxygen to water. Electrons originating from reduced cytochrome c in the intermembrane space (IMS) are transferred via the dinuclear copper A center (CU(A)) of subunit 2 and heme A of subunit 1 to the active site in subunit 1, a binuclear center (BNC) formed by heme A3 and copper B (CU(B)). The BNC reduces molecular oxygen to 2 water molecules using 4 electrons from cytochrome c in the IMS and 4 protons from the mitochondrial matrix. The sequence is that of Cytochrome c oxidase subunit 7B-liver, mitochondrial from Thunnus obesus (Bigeye tuna).